Here is a 176-residue protein sequence, read N- to C-terminus: RNA pyrophosphohydrolase (176 aa).

One can recognise a Nudix hydrolase domain in the interval 8-159 (PYRTCVGMML…KRPVYERVVK (152 aa)). A Nudix box motif is present at residues 47–68 (GGVDPGEDTWAAAKRELYEETS).

Belongs to the Nudix hydrolase family. RppH subfamily. It depends on a divalent metal cation as a cofactor.

Accelerates the degradation of transcripts by removing pyrophosphate from the 5'-end of triphosphorylated RNA, leading to a more labile monophosphorylated state that can stimulate subsequent ribonuclease cleavage. The polypeptide is RNA pyrophosphohydrolase (Rhodopseudomonas palustris (strain BisA53)).